A 336-amino-acid polypeptide reads, in one-letter code: Holliday junction branch migration complex subunit RuvB (336 aa).

Residues 1–181 (MDRIVEIEKF…FGMQFRLEFY (181 aa)) are large ATPase domain (RuvB-L). ATP is bound by residues leucine 20, arginine 21, glycine 62, lysine 65, threonine 66, threonine 67, 128 to 130 (EDF), arginine 171, tyrosine 181, and arginine 218. Residue threonine 66 coordinates Mg(2+). Residues 182-252 (KNEELAIILE…RAKEALDSLG (71 aa)) form a small ATPAse domain (RuvB-S) region. The segment at 255 to 336 (ELGFDAMDLR…KYNKGLFDEK (82 aa)) is head domain (RuvB-H). Arginine 309 and arginine 314 together coordinate DNA.

The protein belongs to the RuvB family. As to quaternary structure, homohexamer. Forms an RuvA(8)-RuvB(12)-Holliday junction (HJ) complex. HJ DNA is sandwiched between 2 RuvA tetramers; dsDNA enters through RuvA and exits via RuvB. An RuvB hexamer assembles on each DNA strand where it exits the tetramer. Each RuvB hexamer is contacted by two RuvA subunits (via domain III) on 2 adjacent RuvB subunits; this complex drives branch migration. In the full resolvosome a probable DNA-RuvA(4)-RuvB(12)-RuvC(2) complex forms which resolves the HJ.

It is found in the cytoplasm. The catalysed reaction is ATP + H2O = ADP + phosphate + H(+). The RuvA-RuvB-RuvC complex processes Holliday junction (HJ) DNA during genetic recombination and DNA repair, while the RuvA-RuvB complex plays an important role in the rescue of blocked DNA replication forks via replication fork reversal (RFR). RuvA specifically binds to HJ cruciform DNA, conferring on it an open structure. The RuvB hexamer acts as an ATP-dependent pump, pulling dsDNA into and through the RuvAB complex. RuvB forms 2 homohexamers on either side of HJ DNA bound by 1 or 2 RuvA tetramers; 4 subunits per hexamer contact DNA at a time. Coordinated motions by a converter formed by DNA-disengaged RuvB subunits stimulates ATP hydrolysis and nucleotide exchange. Immobilization of the converter enables RuvB to convert the ATP-contained energy into a lever motion, pulling 2 nucleotides of DNA out of the RuvA tetramer per ATP hydrolyzed, thus driving DNA branch migration. The RuvB motors rotate together with the DNA substrate, which together with the progressing nucleotide cycle form the mechanistic basis for DNA recombination by continuous HJ branch migration. Branch migration allows RuvC to scan DNA until it finds its consensus sequence, where it cleaves and resolves cruciform DNA. The protein is Holliday junction branch migration complex subunit RuvB of Campylobacter lari (strain RM2100 / D67 / ATCC BAA-1060).